The following is a 104-amino-acid chain: NADH-quinone oxidoreductase subunit K (104 aa).

The next 3 membrane-spanning stretches (helical) occupy residues 4 to 24, 31 to 51, and 67 to 87; these read VPAS…LFGA, VIVL…LVAF, and LFTM…LIAL.

Belongs to the complex I subunit 4L family. In terms of assembly, NDH-1 is composed of 14 different subunits. Subunits NuoA, H, J, K, L, M, N constitute the membrane sector of the complex.

The protein localises to the cell membrane. The catalysed reaction is a quinone + NADH + 5 H(+)(in) = a quinol + NAD(+) + 4 H(+)(out). Functionally, NDH-1 shuttles electrons from NADH, via FMN and iron-sulfur (Fe-S) centers, to quinones in the respiratory chain. The immediate electron acceptor for the enzyme in this species is believed to be a menaquinone. Couples the redox reaction to proton translocation (for every two electrons transferred, four hydrogen ions are translocated across the cytoplasmic membrane), and thus conserves the redox energy in a proton gradient. The protein is NADH-quinone oxidoreductase subunit K of Bacillus cereus (strain Q1).